Reading from the N-terminus, the 582-residue chain is MQSDIEICRNTPLSSIATVAANAGLLPHELDTHGKHKAKVHPQCLERLTDNQDGKLVLVTAITPTPLGEGKTVTTIGLSQGLSKINQSVMACIRQPSMGPVFGVKGGAAGGGYSQVAPMDELNLHLTGDIHAVTAAHNLASAALDARLYHEQREGYDAFEARTSLRALKIDVERITWKRVMDHNDRALRMVKIGLNEEGKNINGFEREEGFDISAASELMAILALANDLKDLRQRIGRIVVAYDLNGNPVTTEDLQVAGAMAVTLKETIAPTLMQTLEGVPTLIHAGPFANIAHGNSSIIADQIALKLSSYVVTEAGFGSDMGFEKACNIKALAADRAPDCVVIVATLRGLKANSGHYDLRPGMAIPDSIFNPDQAALEAGFENLKWHINNVHKYGIPAVVAINQFPQDSGQELAELKALIERFNPEVKVAVSTVFAQGGEGAIELAQHVVETCEQGAQFRPLYTKKQSLKEKLMAVCEVGYGASNIEMSELAKQQLAHFEKLGFDDLAVCIAKTPLSITTDSAIKGAPSGFAVPIRELRLCAGAGFVYALSGNVMTMPGLPDKPTFMNLDLDDQGNIIGLS.

Residue 65–72 (TPLGEGKT) coordinates ATP.

The protein belongs to the formate--tetrahydrofolate ligase family.

The enzyme catalyses (6S)-5,6,7,8-tetrahydrofolate + formate + ATP = (6R)-10-formyltetrahydrofolate + ADP + phosphate. It participates in one-carbon metabolism; tetrahydrofolate interconversion. The sequence is that of Formate--tetrahydrofolate ligase from Vibrio campbellii (strain ATCC BAA-1116).